We begin with the raw amino-acid sequence, 3420 residues long: Adhesin BmaC autotransporter (3420 aa).

The signal sequence occupies residues 1–72 (MPNLANQDFT…SLVMAGTAAA (72 aa)). Residues 3138 to 3420 (GPSGNNGIWA…AGSVGLRVRW (283 aa)) form the Autotransporter domain.

The protein localises to the cell surface. The protein resides in the cell outer membrane. Fibronectin-binding protein, which is involved in adhesion to host cells and in the infective process. Mediates the binding of B.suis to the extracellular matrix and to non-phagocytic cells via cell-associated fibronectin. This Brucella suis biovar 1 (strain 1330) protein is Adhesin BmaC autotransporter.